Reading from the N-terminus, the 124-residue chain is Small ribosomal subunit protein uS13 (124 aa).

A disordered region spans residues 95–124 (GLPVRGQRTRHNARTRKGPRKTVGAKKGKR). Residues 101-124 (QRTRHNARTRKGPRKTVGAKKGKR) are compositionally biased toward basic residues.

It belongs to the universal ribosomal protein uS13 family. Part of the 30S ribosomal subunit. Forms a loose heterodimer with protein S19. Forms two bridges to the 50S subunit in the 70S ribosome.

In terms of biological role, located at the top of the head of the 30S subunit, it contacts several helices of the 16S rRNA. In the 70S ribosome it contacts the 23S rRNA (bridge B1a) and protein L5 of the 50S subunit (bridge B1b), connecting the 2 subunits; these bridges are implicated in subunit movement. Contacts the tRNAs in the A and P-sites. The sequence is that of Small ribosomal subunit protein uS13 from Coprothermobacter proteolyticus (strain ATCC 35245 / DSM 5265 / OCM 4 / BT).